A 256-amino-acid polypeptide reads, in one-letter code: Probable S-methyl-5'-thioinosine phosphorylase (256 aa).

Residues T10 and 47 to 48 (RH) contribute to the phosphate site. M178 provides a ligand contact to substrate. T179 serves as a coordination point for phosphate. 202-204 (NYA) provides a ligand contact to substrate.

It belongs to the PNP/MTAP phosphorylase family. MTAP subfamily. Homotrimer.

The catalysed reaction is S-methyl-5'-thioinosine + phosphate = 5-(methylsulfanyl)-alpha-D-ribose 1-phosphate + hypoxanthine. Its pathway is purine metabolism; purine nucleoside salvage. Functionally, catalyzes the reversible phosphorylation of S-methyl-5'-thioinosine (MTI) to hypoxanthine and 5-methylthioribose-1-phosphate. Involved in the breakdown of S-methyl-5'-thioadenosine (MTA), a major by-product of polyamine biosynthesis. Catabolism of (MTA) occurs via deamination to MTI and phosphorolysis to hypoxanthine. This is Probable S-methyl-5'-thioinosine phosphorylase from Methanopyrus kandleri (strain AV19 / DSM 6324 / JCM 9639 / NBRC 100938).